A 331-amino-acid polypeptide reads, in one-letter code: GTP 3',8-cyclase (331 aa).

The Radical SAM core domain occupies 1–231; the sequence is MNAVDYLRIS…DGQVQGNGPA (231 aa). Arg8 provides a ligand contact to GTP. The [4Fe-4S] cluster site is built by Cys15 and Cys19. Tyr21 contributes to the S-adenosyl-L-methionine binding site. Cys22 serves as a coordination point for [4Fe-4S] cluster. Arg60 contacts GTP. S-adenosyl-L-methionine is bound at residue Gly64. GTP is bound at residue Thr91. Residue Ser115 participates in S-adenosyl-L-methionine binding. Lys157 is a binding site for GTP. Met191 contacts S-adenosyl-L-methionine. Positions 254 and 257 each coordinate [4Fe-4S] cluster. 259–261 lines the GTP pocket; that stretch reads RMR. Cys271 is a [4Fe-4S] cluster binding site.

This sequence belongs to the radical SAM superfamily. MoaA family. As to quaternary structure, monomer and homodimer. Requires [4Fe-4S] cluster as cofactor.

It carries out the reaction GTP + AH2 + S-adenosyl-L-methionine = (8S)-3',8-cyclo-7,8-dihydroguanosine 5'-triphosphate + 5'-deoxyadenosine + L-methionine + A + H(+). It functions in the pathway cofactor biosynthesis; molybdopterin biosynthesis. Its function is as follows. Catalyzes the cyclization of GTP to (8S)-3',8-cyclo-7,8-dihydroguanosine 5'-triphosphate. This Acaryochloris marina (strain MBIC 11017) protein is GTP 3',8-cyclase.